We begin with the raw amino-acid sequence, 851 residues long: Protein FAM13B (851 aa).

Positions 23–212 (IPLDELQQGG…GLLENYYEFF (190 aa)) constitute a Rho-GAP domain. The segment covering 556 to 565 (IKDAKHKNSD) has biased composition (basic and acidic residues). The tract at residues 556-611 (IKDAKHKNSDGEFAPQTRPRSNTLPKSFGSSLDHEDGESEGEPRVIQKEKTPSKEA) is disordered. A compositionally biased stretch (polar residues) spans 573–585 (RPRSNTLPKSFGS). Residues 596 to 611 (GEPRVIQKEKTPSKEA) are compositionally biased toward basic and acidic residues.

This sequence belongs to the FAM13 family.

The protein is Protein FAM13B (Fam13b) of Mus musculus (Mouse).